The primary structure comprises 172 residues: Zinc finger protein 580 (172 aa).

A disordered region spans residues 1–92; that stretch reads MLLLPPRPPH…PGEPGPRKGY (92 aa). Residues 19-30 show a composition bias toward pro residues; it reads MDPPPPKTPPFP. A Glycyl lysine isopeptide (Lys-Gly) (interchain with G-Cter in SUMO2) cross-link involves residue lysine 31. The C2H2-type 1 zinc finger occupies 92 to 114; it reads YSCPECARVFASPLRLQSHRVSH. A Glycyl lysine isopeptide (Lys-Gly) (interchain with G-Cter in SUMO2) cross-link involves residue lysine 118. 2 C2H2-type zinc fingers span residues 120–142 and 150–172; these read FTCGACGKAFKRSSHLSRHRATH and HTCPLCPRRFQDAAELAQHVRLH.

Interacts with SMAD2.

Its subcellular location is the nucleus. Its function is as follows. Involved in the regulation of endothelial cell proliferation and migration. Mediates H(2)O(2)-induced leukocyte chemotaxis by elevating interleukin-8 production and may play a role in inflammation. May be involved in transcriptional regulation. In Mus musculus (Mouse), this protein is Zinc finger protein 580 (Znf580).